A 533-amino-acid polypeptide reads, in one-letter code: DEAD-box ATP-dependent RNA helicase CshA (533 aa).

Residues 2 to 30 carry the Q motif motif; the sequence is TTFRELGLSDSLLQSVESMGFEEATPIQA. Residues 33-203 enclose the Helicase ATP-binding domain; that stretch reads IPHALQGKDI…ERFMTEPQHI (171 aa). An ATP-binding site is contributed by 46 to 53; sequence AQTGTGKT. Residues 151 to 154 carry the DEAD box motif; that stretch reads DEAD. The region spanning 214-374 is the Helicase C-terminal domain; sequence NIQQFYLEVQ…RMDAPTLDEA (161 aa). The tract at residues 428-533 is disordered; that stretch reads TTPIALTSEP…ERKHHSRPQA (106 aa). Over residues 458 to 512 the composition is skewed to basic and acidic residues; that stretch reads DGNRNRSRDGRGGGDGRNRDRNRDGRNRDGNRDRNRDGNRDRNRDGGSRGRRGEG. Residues 524 to 533 show a composition bias toward basic residues; sequence ERKHHSRPQA.

This sequence belongs to the DEAD box helicase family. CshA subfamily. As to quaternary structure, oligomerizes, may be a member of the RNA degradosome.

It localises to the cytoplasm. The enzyme catalyses ATP + H2O = ADP + phosphate + H(+). In terms of biological role, DEAD-box RNA helicase possibly involved in RNA degradation. May work in conjunction with the cold shock proteins to ensure proper initiation of transcription at low and optimal temperatures. Unwinds dsRNA in both 5'- and 3'-directions and shows RNA-dependent ATPase activity. Probably has a somewhat redundant function with cshB, as cshA can partially complement the growth effects of a cshB deletion. Plays a role in adaptation to cold, oxididant and pH stress. The sequence is that of DEAD-box ATP-dependent RNA helicase CshA from Bacillus cereus (strain ATCC 14579 / DSM 31 / CCUG 7414 / JCM 2152 / NBRC 15305 / NCIMB 9373 / NCTC 2599 / NRRL B-3711).